The primary structure comprises 173 residues: Calmodulin-like protein 11 (173 aa).

Residues 1–26 are compositionally biased toward low complexity; that stretch reads MEEIQQQQQQQQQQQQQQQQQQQQQQ. A disordered region spans residues 1–27; sequence MEEIQQQQQQQQQQQQQQQQQQQQQQE. 4 EF-hand domains span residues 31–66, 67–102, 104–139, and 140–173; these read EQIMEFKEAFCLFDKDGDGCITADELATVIRSLDQN, PTEQELQDMITEIDSDGNGTIEFSEFLNLMANQLQE, DADEELKEAFKVFDKDQNGYISASELRHVMINLGEK, and LTDEEVDQMIKEADLDGDGQVNYDEFVRMMMING. Residues Asp44, Asp46, Asp48, Cys50, Glu55, Asp80, Asp82, Asn84, Thr86, Glu91, Asp117, Asp119, Asn121, Tyr123, Glu128, Asp153, Asp155, Asp157, Gln159, and Glu164 each contribute to the Ca(2+) site.

Belongs to the calmodulin family.

In terms of biological role, potential calcium sensor. This is Calmodulin-like protein 11 (CML11) from Arabidopsis thaliana (Mouse-ear cress).